We begin with the raw amino-acid sequence, 268 residues long: L-cystine-binding protein TcyA (268 aa).

The first 19 residues, 1–19 (MKKALLALFMVVSIAALAA), serve as a signal peptide directing secretion. Cysteine 20 carries the N-palmitoyl cysteine lipid modification. Cysteine 20 carries S-diacylglycerol cysteine lipidation.

Belongs to the bacterial solute-binding protein 3 family. As to quaternary structure, the complex is composed of two ATP-binding proteins (TcyC), two transmembrane proteins (TcyB) and a solute-binding protein (TcyA).

It localises to the cell membrane. Functionally, part of the ABC transporter complex TcyABC involved in L-cystine import. The protein is L-cystine-binding protein TcyA (tcyA) of Bacillus subtilis (strain 168).